Consider the following 456-residue polypeptide: Putative alanyl-tRNA editing protein alaX (456 aa).

The Zn(2+) site is built by His-125, His-129, Cys-240, and His-244.

This sequence belongs to the class-II aminoacyl-tRNA synthetase family. Alax-L subfamily. Requires Zn(2+) as cofactor.

Functionally, may function in trans to edit the amino acid moiety from incorrectly charged tRNA(Ala). In Saccharomyces cerevisiae (strain ATCC 204508 / S288c) (Baker's yeast), this protein is Putative alanyl-tRNA editing protein alaX.